Here is a 342-residue protein sequence, read N- to C-terminus: N-acetyl-gamma-glutamyl-phosphate reductase (342 aa).

Cysteine 149 is an active-site residue.

It belongs to the NAGSA dehydrogenase family. Type 1 subfamily.

Its subcellular location is the cytoplasm. It carries out the reaction N-acetyl-L-glutamate 5-semialdehyde + phosphate + NADP(+) = N-acetyl-L-glutamyl 5-phosphate + NADPH + H(+). It participates in amino-acid biosynthesis; L-arginine biosynthesis; N(2)-acetyl-L-ornithine from L-glutamate: step 3/4. In terms of biological role, catalyzes the NADPH-dependent reduction of N-acetyl-5-glutamyl phosphate to yield N-acetyl-L-glutamate 5-semialdehyde. The chain is N-acetyl-gamma-glutamyl-phosphate reductase from Ruegeria pomeroyi (strain ATCC 700808 / DSM 15171 / DSS-3) (Silicibacter pomeroyi).